A 218-amino-acid chain; its full sequence is Cold-regulated protein 28 (218 aa).

Disordered regions lie at residues 1–51 (MEND…ADSK) and 166–218 (TKHS…KPRT). Positions 20–37 (EASAESQSESTLSNSLDS) are enriched in low complexity. Over residues 186–207 (GEVSKKREREANNDDSSLKEDQ) the composition is skewed to basic and acidic residues.

Its subcellular location is the nucleus. Together with COR27, involved in central circadian clock regulation and in flowering promotion, by binding to the chromatin of clock-associated evening genes TOC1, PRR5, ELF4 and cold-responsive genes in order to repress their transcription. Negative regulator of freezing tolerance. The polypeptide is Cold-regulated protein 28 (Arabidopsis thaliana (Mouse-ear cress)).